The primary structure comprises 510 residues: Cytochrome P450 monooxygenase AFLA_114810 (510 aa).

An N-terminal signal peptide occupies residues 1-17 (MLILLGLLCLYTGLYVA). Cys444 provides a ligand contact to heme.

The protein belongs to the cytochrome P450 family. It depends on heme as a cofactor.

It functions in the pathway secondary metabolite biosynthesis. In terms of biological role, cytochrome P450 monooxygenase; part of the gene cluster 41 that mediates the biosynthesis of an extracellular and diffusible metabolite that is able to stimulate colony sclerotial production. This Aspergillus flavus (strain ATCC 200026 / FGSC A1120 / IAM 13836 / NRRL 3357 / JCM 12722 / SRRC 167) protein is Cytochrome P450 monooxygenase AFLA_114810.